Here is a 417-residue protein sequence, read N- to C-terminus: Solanesyl diphosphate synthase 2, chloroplastic (417 aa).

A chloroplast-targeting transit peptide spans methionine 1 to arginine 60. The isopentenyl diphosphate site is built by lysine 137, arginine 140, and histidine 175. Positions 182 and 186 each coordinate Mg(2+). Arginine 191 contacts an all-trans-polyprenyl diphosphate. Arginine 192 serves as a coordination point for isopentenyl diphosphate. Lysine 268, threonine 269, glutamine 306, and lysine 323 together coordinate an all-trans-polyprenyl diphosphate.

The protein belongs to the FPP/GGPP synthase family. Homodimer. Interacts with FBN5. Requires Mg(2+) as cofactor. As to expression, higher expression in leaves than in roots.

It is found in the plastid. It localises to the chloroplast. The catalysed reaction is 5 isopentenyl diphosphate + (2E,6E,10E)-geranylgeranyl diphosphate = all-trans-nonaprenyl diphosphate + 5 diphosphate. In terms of biological role, involved in providing solanesyl diphosphate for plastoquinone-9 (PQ-9) formation in plastids. Catalyzes the elongation of the prenyl side chain of PQ-9 in plastids. Contributes to the biosynthesis of plastochromanol-8 (PC-8) in plastids. Does not contribute to the synthesis of tocopherol or ubiquinone. PQ-9 and PC-8 are lipophilic antioxidants that act as protectant against photooxidative stress under high light stress conditions. Prefers geranylgeranyl diphosphate to farnesyl diphosphate as substrate. No activity with geranyl diphosphate or dimethylallyl diphosphate as substrate. The chain is Solanesyl diphosphate synthase 2, chloroplastic from Arabidopsis thaliana (Mouse-ear cress).